A 424-amino-acid polypeptide reads, in one-letter code: Imidazolonepropionase (424 aa).

2 residues coordinate Fe(3+): H81 and H83. Residues H81 and H83 each contribute to the Zn(2+) site. R90, Y153, and H186 together coordinate 4-imidazolone-5-propanoate. Y153 is a binding site for N-formimidoyl-L-glutamate. H251 contributes to the Fe(3+) binding site. A Zn(2+)-binding site is contributed by H251. E254 lines the 4-imidazolone-5-propanoate pocket. D325 provides a ligand contact to Fe(3+). D325 provides a ligand contact to Zn(2+). N-formimidoyl-L-glutamate is bound by residues N327 and G329. T330 contributes to the 4-imidazolone-5-propanoate binding site.

It belongs to the metallo-dependent hydrolases superfamily. HutI family. It depends on Zn(2+) as a cofactor. Requires Fe(3+) as cofactor.

The protein resides in the cytoplasm. It catalyses the reaction 4-imidazolone-5-propanoate + H2O = N-formimidoyl-L-glutamate. The protein operates within amino-acid degradation; L-histidine degradation into L-glutamate; N-formimidoyl-L-glutamate from L-histidine: step 3/3. Catalyzes the hydrolytic cleavage of the carbon-nitrogen bond in imidazolone-5-propanoate to yield N-formimidoyl-L-glutamate. It is the third step in the universal histidine degradation pathway. This is Imidazolonepropionase from Syntrophobacter fumaroxidans (strain DSM 10017 / MPOB).